Reading from the N-terminus, the 491-residue chain is Fatty acyl-CoA reductase 1 (491 aa).

Belongs to the fatty acyl-CoA reductase family. As to expression, expressed in the endodermal cell layer surrounding the central vasculature in roots. Expressed in the hilum region of seeds. Expressed in lateral root tips, cotyledons, the shoot apex, young leaves, petals, stamen filaments, and receptacle of siliques.

The enzyme catalyses a long-chain fatty acyl-CoA + 2 NADPH + 2 H(+) = a long-chain primary fatty alcohol + 2 NADP(+) + CoA. Its function is as follows. Catalyzes the reduction of fatty acyl-CoA to fatty alcohols. Catalyzes specifically the formation of C18:0 and C22:0 fatty alcohols. Provides the fatty alcohols required for synthesis of suberin in roots, seed coat and wound-induced leaf tissue. Provides the fatty alcohols required for synthesis of alkyl hydroxycinnamates in root waxes. The polypeptide is Fatty acyl-CoA reductase 1 (Arabidopsis thaliana (Mouse-ear cress)).